The sequence spans 421 residues: UDP-N-acetylglucosamine 1-carboxyvinyltransferase (421 aa).

A phosphoenolpyruvate-binding site is contributed by 22–23 (KN). Residue R92 coordinates UDP-N-acetyl-alpha-D-glucosamine. Residue C116 is the Proton donor of the active site. Residue C116 is modified to 2-(S-cysteinyl)pyruvic acid O-phosphothioketal. UDP-N-acetyl-alpha-D-glucosamine-binding residues include D306 and V328.

This sequence belongs to the EPSP synthase family. MurA subfamily.

Its subcellular location is the cytoplasm. It carries out the reaction phosphoenolpyruvate + UDP-N-acetyl-alpha-D-glucosamine = UDP-N-acetyl-3-O-(1-carboxyvinyl)-alpha-D-glucosamine + phosphate. It participates in cell wall biogenesis; peptidoglycan biosynthesis. Functionally, cell wall formation. Adds enolpyruvyl to UDP-N-acetylglucosamine. The polypeptide is UDP-N-acetylglucosamine 1-carboxyvinyltransferase (Thermotoga maritima (strain ATCC 43589 / DSM 3109 / JCM 10099 / NBRC 100826 / MSB8)).